Reading from the N-terminus, the 317-residue chain is tRNA-cytidine(32) 2-sulfurtransferase (317 aa).

Residues 63–68 carry the PP-loop motif motif; the sequence is SGGKDS. C138, C141, and C229 together coordinate [4Fe-4S] cluster.

This sequence belongs to the TtcA family. As to quaternary structure, homodimer. Requires Mg(2+) as cofactor. The cofactor is [4Fe-4S] cluster.

The protein resides in the cytoplasm. It catalyses the reaction cytidine(32) in tRNA + S-sulfanyl-L-cysteinyl-[cysteine desulfurase] + AH2 + ATP = 2-thiocytidine(32) in tRNA + L-cysteinyl-[cysteine desulfurase] + A + AMP + diphosphate + H(+). It functions in the pathway tRNA modification. In terms of biological role, catalyzes the ATP-dependent 2-thiolation of cytidine in position 32 of tRNA, to form 2-thiocytidine (s(2)C32). The sulfur atoms are provided by the cysteine/cysteine desulfurase (IscS) system. The sequence is that of tRNA-cytidine(32) 2-sulfurtransferase from Janthinobacterium sp. (strain Marseille) (Minibacterium massiliensis).